The primary structure comprises 482 residues: Cardiolipin synthase (482 aa).

2 helical membrane passes run 4–24 (LAYL…VTVF) and 34–54 (WAWL…YLIF). 2 consecutive PLD phosphodiesterase domains span residues 217–244 (LNYR…GDEY) and 395–422 (DNGF…DFRS). Residues His-222, Lys-224, Asp-229, His-400, Lys-402, and Asp-407 contribute to the active site.

It belongs to the phospholipase D family. Cardiolipin synthase subfamily.

It is found in the cell membrane. The catalysed reaction is 2 a 1,2-diacyl-sn-glycero-3-phospho-(1'-sn-glycerol) = a cardiolipin + glycerol. Its function is as follows. Catalyzes the reversible phosphatidyl group transfer from one phosphatidylglycerol molecule to another to form cardiolipin (CL) (diphosphatidylglycerol) and glycerol. The polypeptide is Cardiolipin synthase (cls) (Listeria monocytogenes serotype 4a (strain HCC23)).